The sequence spans 183 residues: Adenine phosphoribosyltransferase (183 aa).

This sequence belongs to the purine/pyrimidine phosphoribosyltransferase family. As to quaternary structure, homodimer.

The protein resides in the cytoplasm. The enzyme catalyses AMP + diphosphate = 5-phospho-alpha-D-ribose 1-diphosphate + adenine. Its pathway is purine metabolism; AMP biosynthesis via salvage pathway; AMP from adenine: step 1/1. Functionally, catalyzes a salvage reaction resulting in the formation of AMP, that is energically less costly than de novo synthesis. The polypeptide is Adenine phosphoribosyltransferase (Shewanella sp. (strain MR-7)).